Reading from the N-terminus, the 173-residue chain is Crossover junction endodeoxyribonuclease RuvC (173 aa).

Residues D8, E67, and D139 contribute to the active site. Residues D8, E67, and D139 each coordinate Mg(2+).

The protein belongs to the RuvC family. In terms of assembly, homodimer which binds Holliday junction (HJ) DNA. The HJ becomes 2-fold symmetrical on binding to RuvC with unstacked arms; it has a different conformation from HJ DNA in complex with RuvA. In the full resolvosome a probable DNA-RuvA(4)-RuvB(12)-RuvC(2) complex forms which resolves the HJ. The cofactor is Mg(2+).

Its subcellular location is the cytoplasm. The catalysed reaction is Endonucleolytic cleavage at a junction such as a reciprocal single-stranded crossover between two homologous DNA duplexes (Holliday junction).. In terms of biological role, the RuvA-RuvB-RuvC complex processes Holliday junction (HJ) DNA during genetic recombination and DNA repair. Endonuclease that resolves HJ intermediates. Cleaves cruciform DNA by making single-stranded nicks across the HJ at symmetrical positions within the homologous arms, yielding a 5'-phosphate and a 3'-hydroxyl group; requires a central core of homology in the junction. The consensus cleavage sequence is 5'-(A/T)TT(C/G)-3'. Cleavage occurs on the 3'-side of the TT dinucleotide at the point of strand exchange. HJ branch migration catalyzed by RuvA-RuvB allows RuvC to scan DNA until it finds its consensus sequence, where it cleaves and resolves the cruciform DNA. This is Crossover junction endodeoxyribonuclease RuvC from Photobacterium profundum (strain SS9).